The sequence spans 210 residues: Probable glutathione peroxidase 8 (210 aa).

The chain crosses the membrane as a helical span at residues 21–40 (VLLSMTVGVGCLLLLQTQLL).

It belongs to the glutathione peroxidase family.

The protein resides in the membrane. The enzyme catalyses 2 glutathione + H2O2 = glutathione disulfide + 2 H2O. This Tetraodon nigroviridis (Spotted green pufferfish) protein is Probable glutathione peroxidase 8 (gpx8).